Reading from the N-terminus, the 369-residue chain is Protein HGH1 homolog (369 aa).

It belongs to the HGH1 family.

The chain is Protein HGH1 homolog from Drosophila melanogaster (Fruit fly).